The primary structure comprises 79 residues: Large ribosomal subunit protein uL29 (79 aa).

Belongs to the universal ribosomal protein uL29 family.

This Tropheryma whipplei (strain TW08/27) (Whipple's bacillus) protein is Large ribosomal subunit protein uL29.